The chain runs to 136 residues: MFQSLIAIDYGKARIGLASGQMITKTATPIGTVEAYDGVPNWIELDKIVKRWNPSDIVIGLPLDTQDFETDITKAAKDFAKEVKERYKRNVHLINEAYSTREARWRLEEVKSKKVSHIKVDALAACVILETWMAEN.

Belongs to the YqgF nuclease family.

It is found in the cytoplasm. Could be a nuclease involved in processing of the 5'-end of pre-16S rRNA. The polypeptide is Putative pre-16S rRNA nuclease (Francisella philomiragia subsp. philomiragia (strain ATCC 25017 / CCUG 19701 / FSC 153 / O#319-036)).